Reading from the N-terminus, the 372-residue chain is Zinc finger protein dpff-1 (372 aa).

The segment at 108–204 (VGPTTESVSD…SRSIVKETKY (97 aa)) is disordered. The span at 109–131 (GPTTESVSDSSNDSTTIRPSRQT) shows a compositional bias: polar residues. A compositionally biased stretch (basic and acidic residues) spans 132-141 (QIKEEYRDDY). The segment covering 142 to 158 (VLDDELSPDEFGSDEDD) has biased composition (acidic residues). The segment covering 184-196 (TTRSSVSRLTPSR) has biased composition (polar residues). Residues 212–235 (YPCDKCSAKYKSLAGLSYHQSYLH) form a C2H2-type zinc finger. PHD-type zinc fingers lie at residues 256–314 (SCDF…CKSC) and 316–361 (ICGT…CQVE).

The protein belongs to the requiem/DPF family.

Its subcellular location is the nucleus. The protein resides in the cytoplasm. In terms of biological role, probable transcription factor, involved in meiosis and stress protection. This Caenorhabditis elegans protein is Zinc finger protein dpff-1.